A 177-amino-acid chain; its full sequence is Transmembrane protein 190 (177 aa).

Residues 1–21 (MLGCGIPALGLLLLLQGSADG) form the signal peptide. Residues 22-81 (NGIQGFFYPWSCEGDIWDRESCGGQAAIDSPNLCLRLRCCYRNGVCYHQRPDENVRRKHM) are Extracellular-facing. In terms of domain architecture, P-type spans 31 to 71 (WSCEGDIWDRESCGGQAAIDSPNLCLRLRCCYRNGVCYHQR). Intrachain disulfides connect Cys33–Cys61, Cys43–Cys60, and Cys55–Cys67. Residues 82–102 (WALVWTCSGLLLLSCSICLFW) form a helical membrane-spanning segment. Topologically, residues 103-177 (WAKRRDVLHM…EETEGEEEED (75 aa)) are cytoplasmic. The tract at residues 131–177 (KHRGTKKTPSTGSVPVALSKESRDVEGGTEGEGTEEGEETEGEEEED) is disordered. Residues 157 to 177 (GGTEGEGTEEGEETEGEEEED) show a composition bias toward acidic residues.

Its subcellular location is the membrane. The sequence is that of Transmembrane protein 190 (TMEM190) from Homo sapiens (Human).